Here is a 298-residue protein sequence, read N- to C-terminus: tRNA dimethylallyltransferase (298 aa).

Residue 16-23 (GPTASGKS) coordinates ATP. 18-23 (TASGKS) provides a ligand contact to substrate. 2 interaction with substrate tRNA regions span residues 41-44 (DSMQ) and 165-169 (QRIVR).

This sequence belongs to the IPP transferase family. In terms of assembly, monomer. Mg(2+) is required as a cofactor.

The catalysed reaction is adenosine(37) in tRNA + dimethylallyl diphosphate = N(6)-dimethylallyladenosine(37) in tRNA + diphosphate. Its function is as follows. Catalyzes the transfer of a dimethylallyl group onto the adenine at position 37 in tRNAs that read codons beginning with uridine, leading to the formation of N6-(dimethylallyl)adenosine (i(6)A). This chain is tRNA dimethylallyltransferase, found in Rhizobium rhizogenes (strain K84 / ATCC BAA-868) (Agrobacterium radiobacter).